The primary structure comprises 431 residues: Phosphoribosylamine--glycine ligase (431 aa).

One can recognise an ATP-grasp domain in the interval 109 to 316 (KDFLARHGIP…LVDLVEAAID (208 aa)). ATP is bound at residue 135-196 (VREKGAPIVV…EEFLDGEEAS (62 aa)). Mg(2+) contacts are provided by Glu286 and Asn288.

It belongs to the GARS family. It depends on Mg(2+) as a cofactor. Requires Mn(2+) as cofactor.

It catalyses the reaction 5-phospho-beta-D-ribosylamine + glycine + ATP = N(1)-(5-phospho-beta-D-ribosyl)glycinamide + ADP + phosphate + H(+). Its pathway is purine metabolism; IMP biosynthesis via de novo pathway; N(1)-(5-phospho-D-ribosyl)glycinamide from 5-phospho-alpha-D-ribose 1-diphosphate: step 2/2. The sequence is that of Phosphoribosylamine--glycine ligase from Xanthomonas campestris pv. campestris (strain ATCC 33913 / DSM 3586 / NCPPB 528 / LMG 568 / P 25).